The chain runs to 557 residues: NADP-dependent malic enzyme (557 aa).

The active-site Proton donor is Y91. Residue R144 participates in NADP(+) binding. The active-site Proton acceptor is K162. 3 residues coordinate a divalent metal cation: E234, D235, and D258. NADP(+)-binding positions include D258, 290–307 (GAGE…MAME), and N397.

Belongs to the malic enzymes family. In terms of assembly, homotetramer. The cofactor is Mg(2+). Mn(2+) is required as a cofactor.

It localises to the cytoplasm. It catalyses the reaction (S)-malate + NADP(+) = pyruvate + CO2 + NADPH. It carries out the reaction oxaloacetate + H(+) = pyruvate + CO2. The protein is NADP-dependent malic enzyme (ME1) of Anas platyrhynchos (Mallard).